The primary structure comprises 423 residues: Kynurenine--oxoglutarate transaminase 1 (423 aa).

Position 36 (G36) interacts with substrate. N6-succinyllysine is present on K82. Substrate is bound at residue N185. K247 is subject to N6-(pyridoxal phosphate)lysine. R398 is a binding site for substrate.

Belongs to the class-I pyridoxal-phosphate-dependent aminotransferase family. Homodimer. It depends on pyridoxal 5'-phosphate as a cofactor. In terms of tissue distribution, detected in kidney.

The protein resides in the cytoplasm. The protein localises to the cytosol. Its subcellular location is the mitochondrion matrix. It catalyses the reaction L-kynurenine + 2-oxoglutarate = kynurenate + L-glutamate + H2O. It carries out the reaction 3-phenylpyruvate + L-glutamine = 2-oxoglutaramate + L-phenylalanine. The enzyme catalyses an S-substituted L-cysteine + H2O = a thiol + pyruvate + NH4(+). It participates in amino-acid degradation; L-kynurenine degradation; kynurenate from L-kynurenine: step 1/2. Inhibited by aminooxyacetate (in vitro). Catalyzes the irreversible transamination of the L-tryptophan metabolite L-kynurenine to form kynurenic acid (KA), an intermediate in the tryptophan catabolic pathway which is also a broad spectrum antagonist of the three ionotropic excitatory amino acid receptors among others. Metabolizes the cysteine conjugates of certain halogenated alkenes and alkanes to form reactive metabolites. Catalyzes the beta-elimination of S-conjugates and Se-conjugates of L-(seleno)cysteine, resulting in the cleavage of the C-S or C-Se bond. The sequence is that of Kynurenine--oxoglutarate transaminase 1 from Rattus norvegicus (Rat).